Consider the following 194-residue polypeptide: Recombination protein RecR (194 aa).

The segment at 55–70 (CRECGNLAEGELCPIC) adopts a C4-type zinc-finger fold. One can recognise a Toprim domain in the interval 78–171 (SLLAVVESVA…RVTRPAYGLP (94 aa)).

This sequence belongs to the RecR family.

Its function is as follows. May play a role in DNA repair. It seems to be involved in an RecBC-independent recombinational process of DNA repair. It may act with RecF and RecO. This Thermus thermophilus (strain ATCC BAA-163 / DSM 7039 / HB27) protein is Recombination protein RecR.